Here is a 407-residue protein sequence, read N- to C-terminus: GTPase Obg (407 aa).

An Obg domain is found at 1–159; it reads MKFVDEVSIR…RDLKMEMKVL (159 aa). Residues 127–150 are disordered; sequence NTRFKSSTNRAPRQTTPGKPGDQR. Residues 129–143 show a composition bias toward polar residues; sequence RFKSSTNRAPRQTTP. The OBG-type G domain occupies 160–333; the sequence is ADVGLLGLPN…LSHDLMRYLE (174 aa). Residues 166–173, 191–195, 213–216, 283–286, and 314–316 contribute to the GTP site; these read GLPNAGKS, FTTLV, DIPG, NKAD, and SAI. Residues Ser173 and Thr193 each coordinate Mg(2+). Residues 378–407 are disordered; it reads VKSVHDIGDDDDWDDFEDDEDGPEIIYVRD. Over residues 385 to 400 the composition is skewed to acidic residues; sequence GDDDDWDDFEDDEDGP.

Belongs to the TRAFAC class OBG-HflX-like GTPase superfamily. OBG GTPase family. As to quaternary structure, monomer. Mg(2+) is required as a cofactor.

The protein localises to the cytoplasm. Functionally, an essential GTPase which binds GTP, GDP and possibly (p)ppGpp with moderate affinity, with high nucleotide exchange rates and a fairly low GTP hydrolysis rate. Plays a role in control of the cell cycle, stress response, ribosome biogenesis and in those bacteria that undergo differentiation, in morphogenesis control. This chain is GTPase Obg, found in Pseudomonas entomophila (strain L48).